The sequence spans 411 residues: Tyrosine--tRNA ligase (411 aa).

Tyr33 provides a ligand contact to L-tyrosine. A 'HIGH' region motif is present at residues 38–47 (PTADSLHLGN). 2 residues coordinate L-tyrosine: Tyr160 and Gln164. The 'KMSKS' region motif lies at 222-226 (KFGKS). Lys225 is a binding site for ATP. The 65-residue stretch at 346–410 (VNLVNFLVEN…GKKKILICKV (65 aa)) folds into the S4 RNA-binding domain.

This sequence belongs to the class-I aminoacyl-tRNA synthetase family. TyrS type 1 subfamily. In terms of assembly, homodimer.

It is found in the cytoplasm. It carries out the reaction tRNA(Tyr) + L-tyrosine + ATP = L-tyrosyl-tRNA(Tyr) + AMP + diphosphate + H(+). Functionally, catalyzes the attachment of tyrosine to tRNA(Tyr) in a two-step reaction: tyrosine is first activated by ATP to form Tyr-AMP and then transferred to the acceptor end of tRNA(Tyr). This chain is Tyrosine--tRNA ligase, found in Mycoplasmopsis synoviae (strain 53) (Mycoplasma synoviae).